The primary structure comprises 341 residues: L-threonine 3-dehydrogenase (341 aa).

Cysteine 38 is a Zn(2+) binding site. Active-site charge relay system residues include threonine 40 and histidine 43. Residues histidine 63, glutamate 64, cysteine 93, cysteine 96, cysteine 99, and cysteine 107 each coordinate Zn(2+). Residues isoleucine 175, aspartate 195, arginine 200, 262–264, and 286–287 each bind NAD(+); these read LGI and IY.

The protein belongs to the zinc-containing alcohol dehydrogenase family. Homotetramer. It depends on Zn(2+) as a cofactor.

It localises to the cytoplasm. The catalysed reaction is L-threonine + NAD(+) = (2S)-2-amino-3-oxobutanoate + NADH + H(+). Its pathway is amino-acid degradation; L-threonine degradation via oxydo-reductase pathway; glycine from L-threonine: step 1/2. Its function is as follows. Catalyzes the NAD(+)-dependent oxidation of L-threonine to 2-amino-3-ketobutyrate. This is L-threonine 3-dehydrogenase from Shewanella sp. (strain MR-7).